A 259-amino-acid chain; its full sequence is MSQLQWLDADNLRFPPTHSALRDPDGLLAVGGDLSPARLIESYSHGIFPWYSDGQPLLWWTPDPRMVLRPAHVHRGRTLRKLLRQHPFTVTVDSAFDAVAQACGTIEREGQDGTWITQEMLAAYSELNRLGVAHSLEVWLQNELVGGLYGIALGTVFFGESMFSRVSGASKVGFSILCQQLENWGFELVDCQIHSGYLASFGAQEIPRATFEKLLAQHVWNIPRVPSAACYQSPIPTTSRPCPPLINWQMAWTAGEDLA.

The protein belongs to the L/F-transferase family.

It is found in the cytoplasm. The catalysed reaction is N-terminal L-lysyl-[protein] + L-leucyl-tRNA(Leu) = N-terminal L-leucyl-L-lysyl-[protein] + tRNA(Leu) + H(+). It carries out the reaction N-terminal L-arginyl-[protein] + L-leucyl-tRNA(Leu) = N-terminal L-leucyl-L-arginyl-[protein] + tRNA(Leu) + H(+). The enzyme catalyses L-phenylalanyl-tRNA(Phe) + an N-terminal L-alpha-aminoacyl-[protein] = an N-terminal L-phenylalanyl-L-alpha-aminoacyl-[protein] + tRNA(Phe). Functions in the N-end rule pathway of protein degradation where it conjugates Leu, Phe and, less efficiently, Met from aminoacyl-tRNAs to the N-termini of proteins containing an N-terminal arginine or lysine. The sequence is that of Leucyl/phenylalanyl-tRNA--protein transferase from Teredinibacter turnerae (strain ATCC 39867 / T7901).